A 114-amino-acid chain; its full sequence is Iron-sulfur cluster insertion protein ErpA (114 aa).

Residues Cys-42, Cys-106, and Cys-108 each contribute to the iron-sulfur cluster site.

The protein belongs to the HesB/IscA family. As to quaternary structure, homodimer. It depends on iron-sulfur cluster as a cofactor.

Required for insertion of 4Fe-4S clusters for at least IspG. This Klebsiella pneumoniae subsp. pneumoniae (strain ATCC 700721 / MGH 78578) protein is Iron-sulfur cluster insertion protein ErpA.